Consider the following 364-residue polypeptide: Methylthioribose-1-phosphate isomerase (364 aa).

Asp246 serves as the catalytic Proton donor.

This sequence belongs to the eIF-2B alpha/beta/delta subunits family. MtnA subfamily.

The protein localises to the cytoplasm. The protein resides in the nucleus. It catalyses the reaction 5-(methylsulfanyl)-alpha-D-ribose 1-phosphate = 5-(methylsulfanyl)-D-ribulose 1-phosphate. Its pathway is amino-acid biosynthesis; L-methionine biosynthesis via salvage pathway; L-methionine from S-methyl-5-thio-alpha-D-ribose 1-phosphate: step 1/6. Functionally, catalyzes the interconversion of methylthioribose-1-phosphate (MTR-1-P) into methylthioribulose-1-phosphate (MTRu-1-P). This is Methylthioribose-1-phosphate isomerase from Bombyx mori (Silk moth).